Consider the following 86-residue polypeptide: Small ribosomal subunit protein uS15 (86 aa).

Belongs to the universal ribosomal protein uS15 family. In terms of assembly, part of the 30S ribosomal subunit. Forms a bridge to the 50S subunit in the 70S ribosome, contacting the 23S rRNA.

Its function is as follows. One of the primary rRNA binding proteins, it binds directly to 16S rRNA where it helps nucleate assembly of the platform of the 30S subunit by binding and bridging several RNA helices of the 16S rRNA. In terms of biological role, forms an intersubunit bridge (bridge B4) with the 23S rRNA of the 50S subunit in the ribosome. This is Small ribosomal subunit protein uS15 from Mycoplasma pneumoniae (strain ATCC 29342 / M129 / Subtype 1) (Mycoplasmoides pneumoniae).